The primary structure comprises 301 residues: Porin (301 aa).

In terms of assembly, homotrimer.

It is found in the cell outer membrane. Forms channels that allow the passive diffusion of small hydrophilic solutes up to an exclusion limit of about 0.6 kDa. This Rhodobacter capsulatus (Rhodopseudomonas capsulata) protein is Porin.